A 963-amino-acid polypeptide reads, in one-letter code: Iron-responsive element-binding protein 2 (963 aa).

[4Fe-4S] cluster contacts are provided by Cys-512, Cys-578, and Cys-581.

It belongs to the aconitase/IPM isomerase family. Interacts with RBCK1 only in iron-rich conditions. Interacts (when associated with the 4Fe-4S) with FBXL5. Interacts with CIAO1 and CIAO2A. Requires [4Fe-4S] cluster as cofactor. Ubiquitinated and degraded by the proteasome in presence of high level of iron and oxygen. Ubiquitinated by a SCF complex containing FBXL5. Upon iron and oxygen depletion FBXL5 is degraded, preventing ubiquitination and allowing its RNA-binding activity. Ubiquitously expressed in rat tissues, the highest amounts present in skeletal muscle and heart.

Its subcellular location is the cytoplasm. In terms of biological role, RNA-binding protein that binds to iron-responsive elements (IRES), which are stem-loop structures found in the 5'-UTR of ferritin, and delta aminolevulinic acid synthase mRNAs, and in the 3'-UTR of transferrin receptor mRNA. Binding to the IRE element in ferritin results in the repression of its mRNA translation. Binding of the protein to the transferrin receptor mRNA inhibits the degradation of this otherwise rapidly degraded mRNA. The protein is Iron-responsive element-binding protein 2 (Ireb2) of Rattus norvegicus (Rat).